Here is a 169-residue protein sequence, read N- to C-terminus: Allophycocyanin subunit beta-18 (169 aa).

Asparagine 72 is subject to N4-methylasparagine. Cysteine 82 contributes to the (2R,3E)-phycocyanobilin binding site.

This sequence belongs to the phycobiliprotein family. As to quaternary structure, heterodimer of ApcE and this beta chain. In terms of processing, contains one covalently linked bilin chromophore. The chromophore is added by phycocyanobilin lyase CpcS 1.

It is found in the cellular thylakoid membrane. Functionally, a variant beta-allophycocyanin (AP) which forms a complex with ApcE, a phycobilisome terminal emitter that influences energy transfer to photosystem II. The chain is Allophycocyanin subunit beta-18 (apcF) from Nostoc sp. (strain PCC 7120 / SAG 25.82 / UTEX 2576).